The chain runs to 457 residues: C4-dicarboxylate transport protein (457 aa).

Helical transmembrane passes span 20 to 42, 51 to 73, 88 to 110, 138 to 158, 166 to 188, 212 to 234, and 241 to 263; these read LYFQ…PAFA, AFIK…TGIA, AMAY…AHVV, LTLV…AFTG, LTGP…LALV, ILMR…KYGV, and AWLV…GLVS.

It belongs to the dicarboxylate/amino acid:cation symporter (DAACS) (TC 2.A.23) family.

The protein resides in the cell inner membrane. In terms of biological role, responsible for the transport of dicarboxylates such as succinate, fumarate, and malate from the periplasm across the membrane. This Xanthomonas axonopodis pv. citri (strain 306) protein is C4-dicarboxylate transport protein.